A 546-amino-acid polypeptide reads, in one-letter code: Methionine--tRNA ligase (546 aa).

Positions 15–25 match the 'HIGH' region motif; sequence PYANGPIHLGH. The Zn(2+) site is built by Cys146, Cys149, Cys159, and Cys162. The 'KMSKS' region motif lies at 332-336; it reads KMSKS. Lys335 contributes to the ATP binding site.

It belongs to the class-I aminoacyl-tRNA synthetase family. MetG type 1 subfamily. Monomer. Zn(2+) is required as a cofactor.

The protein resides in the cytoplasm. It carries out the reaction tRNA(Met) + L-methionine + ATP = L-methionyl-tRNA(Met) + AMP + diphosphate. In terms of biological role, is required not only for elongation of protein synthesis but also for the initiation of all mRNA translation through initiator tRNA(fMet) aminoacylation. The protein is Methionine--tRNA ligase of Coxiella burnetii (strain Dugway 5J108-111).